We begin with the raw amino-acid sequence, 429 residues long: Carboxypeptidase B (429 aa).

Residues 1 to 15 (MKFLLVLALCAVVYA) form the signal peptide. A Peptidase M14 domain is found at 121–423 (NYQELEVIDE…EGIVVGARRA (303 aa)). Zn(2+) contacts are provided by H182 and E185. Residues 182–185 (HARE), R236, and 256–257 (NR) contribute to the substrate site. Residues C250 and C273 are joined by a disulfide bond. H309 is a Zn(2+) binding site. Substrate is bound by residues 310–311 (SF) and Y365. The active-site Proton donor/acceptor is the E387.

The protein belongs to the peptidase M14 family. Zn(2+) serves as cofactor.

It is found in the secreted. The enzyme catalyses Preferential release of a C-terminal lysine or arginine amino acid.. Highly resistant to inhibition by potato carboxypeptidase inhibitor (PCI). Moderately inhibited by leech carboxypeptidase inhibitor (LCI) and tick carboxypeptidase inhibitor (TCI). Functionally, metalloprotease which cleaves a single amino acid from the C-terminal end of polypeptide chains. Shows a strong preference for peptides with a terminal lysine residue. This chain is Carboxypeptidase B, found in Helicoverpa zea (Corn earworm moth).